The chain runs to 239 residues: Pyridoxine 5'-phosphate synthase (239 aa).

A 3-amino-2-oxopropyl phosphate-binding site is contributed by Asn-7. A 1-deoxy-D-xylulose 5-phosphate-binding site is contributed by Asp-9–His-10. Arg-18 contacts 3-amino-2-oxopropyl phosphate. The active-site Proton acceptor is His-43. 1-deoxy-D-xylulose 5-phosphate contacts are provided by Arg-45 and His-50. Glu-70 acts as the Proton acceptor in catalysis. 1-deoxy-D-xylulose 5-phosphate is bound at residue Thr-100. Catalysis depends on His-191, which acts as the Proton donor. 3-amino-2-oxopropyl phosphate contacts are provided by residues Gly-192 and Gly-213–His-214.

Belongs to the PNP synthase family. As to quaternary structure, homooctamer; tetramer of dimers.

It is found in the cytoplasm. The enzyme catalyses 3-amino-2-oxopropyl phosphate + 1-deoxy-D-xylulose 5-phosphate = pyridoxine 5'-phosphate + phosphate + 2 H2O + H(+). Its pathway is cofactor biosynthesis; pyridoxine 5'-phosphate biosynthesis; pyridoxine 5'-phosphate from D-erythrose 4-phosphate: step 5/5. Its function is as follows. Catalyzes the complicated ring closure reaction between the two acyclic compounds 1-deoxy-D-xylulose-5-phosphate (DXP) and 3-amino-2-oxopropyl phosphate (1-amino-acetone-3-phosphate or AAP) to form pyridoxine 5'-phosphate (PNP) and inorganic phosphate. The protein is Pyridoxine 5'-phosphate synthase of Syntrophotalea carbinolica (strain DSM 2380 / NBRC 103641 / GraBd1) (Pelobacter carbinolicus).